The following is a 796-amino-acid chain: Peroxisome proliferator-activated receptor gamma coactivator 1-alpha (796 aa).

Residue lysine 77 is modified to N6-acetyllysine. The interval 98–138 (PVDEDGLPSFDALTDGDVTTDNEASPSSMPDGTPPPQEAEE) is disordered. The span at 114-127 (DVTTDNEASPSSMP) shows a compositional bias: polar residues. The short motif at 142–146 (LKKLL) is the LXXLL motif element. Residue lysine 144 is modified to N6-acetyllysine. Phosphothreonine; by AMPK is present on threonine 176. Position 182 is an N6-acetyllysine (lysine 182). Residues 211-275 (YLTTNDDPPH…NDPKGSPFEN (65 aa)) form a disordered region. Basic and acidic residues predominate over residues 217–235 (DPPHTKPTENRNSSRDKCA). Positions 242–258 (TQPQSQHAQAKPTTLSL) are enriched in polar residues. N6-acetyllysine occurs at positions 252, 269, 276, 319, 345, 411, 440, and 449. Residues 288–350 (GTAGLTPPTT…HSTKKGPEQS (63 aa)) form a disordered region. The interaction with PPARG stretch occupies residues 291 to 337 (GLTPPTTPPHKANQDNPFKASPKLKPSCKTVVPPPTKRARYSECSGT). Positions 348–796 (EQSELYAQLS…LKEAQRSLRR (449 aa)) are mediates interaction with RNF34. Position 537 is a phosphoserine; by AMPK (serine 537). Disordered stretches follow at residues 541-597 (FNSP…SSRS) and 611-669 (HRNS…QKQK). A compositionally biased stretch (basic residues) spans 561–576 (QRMRSRSRSFSRHRSC). Residues 577–597 (SRSPYSRSRSRSPGSRSSSRS) are compositionally biased toward low complexity. Residues 620 to 629 (SRSRSPYSRR) show a composition bias toward basic residues. Positions 630-669 (PRYDSYEANEHERLKRDEYRREYEKRESERAKQRERQKQK) are enriched in basic and acidic residues. The 77-residue stretch at 675–751 (RVIYVGKIRP…TDFELYFCGR (77 aa)) folds into the RRM domain. Lysine 756 and lysine 777 each carry N6-acetyllysine.

In terms of assembly, homooligomer. Interacts with MYBBP1A; inhibits MYBBP1A transcriptional activation. Interacts with PRDM16, LPIN1 and PML. Interacts (via LXXLL motif) with RORA and RORC (via AF-2 motif); activates RORA and RORC transcriptional activation. Interacts with LRPPRC. Interacts with FOXO1. Interacts with NR5A2. In terms of processing, phosphorylation by AMPK in skeletal muscle increases activation of its own promoter. Phosphorylated by CLK2. Post-translationally, heavily acetylated by KAT2A/GCN5 under conditions of high nutrients, leading to inactivation of PPARGC1A. Deacetylated by SIRT1 in low nutrients/high NAD conditions, leading to its activation. Ubiquitinated. Ubiquitination by RNF34 induces proteasomal degradation.

It is found in the nucleus. Its subcellular location is the PML body. Its function is as follows. Transcriptional coactivator for steroid receptors and nuclear receptors. Greatly increases the transcriptional activity of PPARG and thyroid hormone receptor on the uncoupling protein promoter. Can regulate key mitochondrial genes that contribute to the program of adaptive thermogenesis. Plays an essential role in metabolic reprogramming in response to dietary availability through coordination of the expression of a wide array of genes involved in glucose and fatty acid metabolism. Acts as a key regulator of gluconeogenesis: stimulates hepatic gluconeogenesis by increasing the expression of gluconeogenic enzymes, and acting together with FOXO1 to promote the fasting gluconeogenic program. Induces the expression of PERM1 in the skeletal muscle in an ESRRA-dependent manner. Also involved in the integration of the circadian rhythms and energy metabolism. Required for oscillatory expression of clock genes, such as BMAL1 and NR1D1, through the coactivation of RORA and RORC, and metabolic genes, such as PDK4 and PEPCK. The polypeptide is Peroxisome proliferator-activated receptor gamma coactivator 1-alpha (Ppargc1a) (Rattus norvegicus (Rat)).